Reading from the N-terminus, the 203-residue chain is Sarcosine oxidase subunit gamma (203 aa).

Belongs to the SoxG family. In terms of assembly, heterotetramer composed of subunits alpha (SoxA), beta (SoxB), gamma (SoxG) and delta (SoxD).

It is found in the cytoplasm. It catalyses the reaction sarcosine + (6S)-5,6,7,8-tetrahydrofolate + O2 = (6R)-5,10-methylene-5,6,7,8-tetrahydrofolate + glycine + H2O2. It carries out the reaction sarcosine + O2 + H2O = formaldehyde + glycine + H2O2. In the presence of tetrahydrofolate, catalyzes the oxidative demethylation of sarcosine to yield glycine, 5,10-methylenetetrahydrofolate and hydrogen peroxide. In the absence of tetrahydrofolate, catalyzes the oxidative demethylation of sarcosine to yield glycine, formaldehyde and hydrogen peroxide. The sequence is that of Sarcosine oxidase subunit gamma from Corynebacterium sp. (strain P-1).